We begin with the raw amino-acid sequence, 728 residues long: Nucleolar GTP-binding protein 2 (728 aa).

At methionine 1 the chain carries N-acetylmethionine. A disordered region spans residues 1-33; that stretch reads MVKPKYKGRSTINRSAASTNPDRVQGAGGQNMR. Polar residues predominate over residues 10–22; the sequence is STINRSAASTNPD. Residues 207–368 enclose the CP-type G domain; it reads WGELYKVIDS…LIDCPGVVYP (162 aa). GTP-binding positions include 317 to 324 and 361 to 365; these read GYPNVGKS and DCPGV. Disordered stretches follow at residues 462-521, 538-595, and 636-728; these read PPNA…RNSE, VGPQ…DTKA, and YKEE…RQKQ. Residues 480-489 are compositionally biased toward low complexity; that stretch reads EVPTETTQNN. Positions 498–520 are enriched in basic and acidic residues; that stretch reads EVERSDSITEKEPEGDCSQDRNS. Serine 504 carries the phosphoserine modification. Over residues 553–586 the composition is skewed to acidic residues; it reads SDLEDLESSGEEEEQEQEQPGEDAEEERSPDTQE. Residues 718-728 are compositionally biased toward basic residues; it reads KHRRNKFRQKQ.

It belongs to the TRAFAC class YlqF/YawG GTPase family. NOG2 subfamily. Interacts with LYAR and RPL23A. Interacts with the nuclear importin-beta receptor and, at a lower extent, with importin-alpha.

The protein resides in the nucleus. It localises to the nucleolus. In terms of biological role, GTPase that associates with pre-60S ribosomal subunits in the nucleolus and is required for their nuclear export and maturation. May promote cell proliferation possibly by increasing p53/TP53 protein levels, and consequently those of its downstream product CDKN1A/p21, and decreasing RPL23A protein levels. In Mus musculus (Mouse), this protein is Nucleolar GTP-binding protein 2 (Gnl2).